Here is a 225-residue protein sequence, read N- to C-terminus: UPF0758 protein Shewmr4_3597 (225 aa).

The MPN domain maps to 102 to 224 (VLTNPDLTRD…IVSFAERGWI (123 aa)). Zn(2+)-binding residues include histidine 173, histidine 175, and aspartate 186. The short motif at 173–186 (HNHPSGIAEPSQAD) is the JAMM motif element.

The protein belongs to the UPF0758 family.

This Shewanella sp. (strain MR-4) protein is UPF0758 protein Shewmr4_3597.